The chain runs to 508 residues: Protein DETOXIFICATION 52 (508 aa).

12 consecutive transmembrane segments (helical) span residues 48-68, 78-98, 122-142, 156-176, 189-209, 222-242, 270-290, 300-320, 341-361, 368-388, 415-437, and 441-463; these read ILAA…LGHI, LAIA…ALGM, VLFL…LGKI, AQTY…LHPL, LTLA…FLVS, AAAS…IAGL, IGVC…GLLI, GILI…GLAV, IVAV…AWGV, IFTN…ILGL, INLG…WAAY, and GLWV…VVAT.

It belongs to the multi antimicrobial extrusion (MATE) (TC 2.A.66.1) family. Detected in the part of the veins in cotyledons of 6-day-old seedlings and the basal parts of the petioles in older plants. Highly expressed in the vascular tissues of hypocotyl in dark-grown seedlings.

The protein localises to the late endosome membrane. May act as a negative regulator of hypocotyl cell elongation in the light. The protein is Protein DETOXIFICATION 52 of Arabidopsis thaliana (Mouse-ear cress).